Here is a 5054-residue protein sequence, read N- to C-terminus: Malformin synthetase mlfA (5054 aa).

An adenylation 1 region spans residues 194–585 (ERRAANRPHS…CGRADTQVKL (392 aa)). The Carrier 1 domain occupies 723-799 (LGLSQLEQEI…EASSLAEVQE (77 aa)). Serine 760 carries the post-translational modification O-(pantetheine 4'-phosphoryl)serine. The segment at 837 to 1268 (EDVFPCTTMQ…ALNTLTLLQA (432 aa)) is condensation 1. The adenylation 2 stretch occupies residues 1296-1685 (DRWVTRQPES…GRKDTQVKLR (390 aa)). Residues 1823–1900 (TASSKLELTL…QLAAILGEAT (78 aa)) form the Carrier 2 domain. At serine 1860 the chain carries O-(pantetheine 4'-phosphoryl)serine. 2 disordered regions span residues 1899–1929 (ATGQ…NDGV) and 1964–1994 (GSSS…VSPV). Composition is skewed to low complexity over residues 1904–1927 (ESSA…STND) and 1965–1981 (SSSC…SSSS). The interval 2033 to 2448 (EDIYPATALQ…GVSYRDKQTL (416 aa)) is condensation 2. The adenylation 3 stretch occupies residues 2471 to 2863 (VRTPHAPAVF…IGRRDGQLKL (393 aa)). The region spanning 2999 to 3075 (RPATAQEREM…QLMRHLSANG (77 aa)) is the Carrier 3 domain. The residue at position 3036 (serine 3036) is an O-(pantetheine 4'-phosphoryl)serine. Condensation regions lie at residues 3092 to 3557 (WVPL…TYDQ) and 3578 to 3997 (DIYP…EQLV). An adenylation 4 region spans residues 4022–4412 (HSSREAACAW…VGRKDNQIKF (391 aa)). The 77-residue stretch at 4546 to 4622 (MPFTAAECKM…DLAYRTANLV (77 aa)) folds into the Carrier 4 domain. Serine 4583 bears the O-(pantetheine 4'-phosphoryl)serine mark. The interval 4659–4972 (EVLPTTSFQR…LQTIVQHQNN (314 aa)) is condensation 5.

Belongs to the NRP synthetase family.

Its pathway is secondary metabolite biosynthesis. In terms of biological role, nonribosomal peptide synthetase; part of the gene cluster that mediates the biosynthesis of malformins, cyclic pentapeptides with a disulfide bond between 2 consecutive cysteins, that show potential anti-tumor as well as antimalarial and antitrypanosomal properties. The nonribosomal peptide synthetase mlfA is responsible of the formation of the cyclic pentapeptide. The malformin biosynthesis clusters in malformin-producing fungi also contain enzymes involved in the formation of the disulfide bond between the two consecutive cysteins within malformins, in addition to additional tailoring enzymes such as methyltransferases or oxidoreductases. They are also composed of up to 4 major facilitator superfamily transporters, and transcription factors probably involved in the regulation of the expression of those clusters. The polypeptide is Malformin synthetase mlfA (Aspergillus niger (strain ATCC MYA-4892 / CBS 513.88 / FGSC A1513)).